Consider the following 267-residue polypeptide: Hydroxynaphthalene reductase-like protein Arp2 (267 aa).

Positions 25, 45, 71, and 98 each coordinate NADP(+). Catalysis depends on proton donor residues Ser147 and Ser148. The NADP(+) site is built by Tyr162, Lys166, Val195, and Thr197. Tyr162 (proton acceptor) is an active-site residue. Lys166 (lowers pKa of active site Tyr) is an active-site residue.

It belongs to the short-chain dehydrogenases/reductases (SDR) family.

Hydroxynaphthalene reductase-like protein; part of the Pks2 gene cluster that mediates the formation of infectious structures (appressoria), enabling these fungi to kill insects faster. The product of the Pks2 gene cluster is different from the one of Pks1 and has still not been identified. This Metarhizium robertsii (strain ARSEF 23 / ATCC MYA-3075) (Metarhizium anisopliae (strain ARSEF 23)) protein is Hydroxynaphthalene reductase-like protein Arp2.